Reading from the N-terminus, the 416-residue chain is Serine protease hepsin (416 aa).

Residues 1–18 (MAKEGGRTAPCCSRPKVA) are Cytoplasmic-facing. The helical; Signal-anchor for type II membrane protein transmembrane segment at 19 to 39 (ALTVGTLLFLTGIGAASWAIV) threads the bilayer. Residues 40–416 (TILLRSDQEP…SEATGMVTQP (377 aa)) are Extracellular-facing. One can recognise an SRCR domain in the interval 53–150 (VQLSPGDSRL…RGRFLTATCQ (98 aa)). Disulfide bonds link Cys76–Cys139, Cys89–Cys149, Cys118–Cys137, Cys152–Cys276, Cys187–Cys203, Cys290–Cys358, Cys321–Cys337, and Cys348–Cys380. Asn111 carries an N-linked (GlcNAc...) asparagine glycan. The Peptidase S1 domain occupies 162 to 404 (IVGGQDSSLG…FREWIFQAIK (243 aa)). Residues His202 and Asp256 each act as charge relay system in the active site. Ser352 (charge relay system) is an active-site residue.

Belongs to the peptidase S1 family. As to expression, widely expressed. Present in brain, heart, kidney, liver, stomach, muscle, lung, testis, skin and eye. Not expressed in ovary and thynus. In inner ear tissues, expressed in stria vascularis, modiolus, organ of Corti and spiral ganglion.

It is found in the cell membrane. The protein resides in the apical cell membrane. The enzyme catalyses Cleavage after basic amino-acid residues, with Arg strongly preferred to Lys.. Its function is as follows. Serine protease that cleaves extracellular substrates, and contributes to the proteolytic processing of growth factors, such as HGF and MST1/HGFL. Plays a role in cell growth and maintenance of cell morphology. Plays a role in the proteolytic processing of ACE2. Mediates the proteolytic cleavage of urinary UMOD that is required for UMOD polymerization. This is Serine protease hepsin (Hpn) from Rattus norvegicus (Rat).